The chain runs to 147 residues: Methylmalonyl-CoA mutase homolog (147 aa).

This sequence to methylmalonyl-CoA mutase.

This chain is Methylmalonyl-CoA mutase homolog, found in Alkalihalophilus pseudofirmus (strain ATCC BAA-2126 / JCM 17055 / OF4) (Bacillus pseudofirmus).